We begin with the raw amino-acid sequence, 60 residues long: TERPDFCLEPPYTGPCKAAMIRYFYNAKAGFCETFVYGGCRAKSNNFKSAEDCMRTCGGA.

One can recognise a BPTI/Kunitz inhibitor domain in the interval 7–57 (CLEPPYTGPCKAAMIRYFYNAKAGFCETFVYGGCRAKSNNFKSAEDCMRTC). Intrachain disulfides connect C7–C57, C16–C40, and C32–C53.

It is found in the secreted. Its function is as follows. This inhibitor has activity very similar to that of the basic protease inhibitor from bovine tissues. This chain is Serum basic protease inhibitor, found in Bos taurus (Bovine).